The following is a 116-amino-acid chain: Nucleoid-associated protein EUBELI_02017 (116 aa).

A compositionally biased stretch (gly residues) spans 1 to 12; sequence MAKRGGFPGGMP. The interval 1–42 is disordered; the sequence is MAKRGGFPGGMPGNMNNLMKQAQRMQRQMEEQQAELENKEFS. A compositionally biased stretch (low complexity) spans 13 to 26; the sequence is GNMNNLMKQAQRMQ.

Belongs to the YbaB/EbfC family. Homodimer.

It localises to the cytoplasm. It is found in the nucleoid. Functionally, binds to DNA and alters its conformation. May be involved in regulation of gene expression, nucleoid organization and DNA protection. This chain is Nucleoid-associated protein EUBELI_02017, found in Lachnospira eligens (strain ATCC 27750 / DSM 3376 / VPI C15-48 / C15-B4) (Eubacterium eligens).